Reading from the N-terminus, the 187-residue chain is Transcriptional activator of sulfur metabolism MET28 (187 aa).

Residues 105–168 (DKIKQERRRK…EFWKAKLNDI (64 aa)) enclose the bZIP domain. A basic motif region spans residues 106–136 (KIKQERRRKNTEASQRFRIRKKQKNFENMNK). Residues 137-151 (LQNLNTQINKLRDRI) are leucine-zipper.

This sequence belongs to the bZIP family. In terms of assembly, interacts with MET4 to form a heteromeric complex which also includes CBF1. Forms two alternate complexes associating MET28 with MET4 and either MET31 or MET32. Binds to DNA through the MET4-MET28-CBF1 complex.

The protein resides in the cytoplasm. It is found in the nucleus. In terms of biological role, acts as an accessory factor in the activation of sulfur amino acids metabolism genes. Possesses no intrinsic transcription activation abilities. Binds to the MET16 promoter as a complex with MET4 and CBF1. Enhances the DNA-binding activity of CBF1. The protein is Transcriptional activator of sulfur metabolism MET28 (MET28) of Saccharomyces cerevisiae (strain ATCC 204508 / S288c) (Baker's yeast).